An 87-amino-acid polypeptide reads, in one-letter code: uncharacterized protein (87 aa).

In terms of domain architecture, 2Fe-2S ferredoxin-type spans 4 to 87 (SIIEITNIKK…KPKGNITIKI (84 aa)). [2Fe-2S] cluster is bound by residues Cys-38, Cys-43, Cys-46, and Cys-75.

Requires [2Fe-2S] cluster as cofactor.

This is an uncharacterized protein from Buchnera aphidicola subsp. Acyrthosiphon pisum (strain APS) (Acyrthosiphon pisum symbiotic bacterium).